Reading from the N-terminus, the 950-residue chain is Translation initiation factor IF-2 (950 aa).

Composition is skewed to basic and acidic residues over residues 128–156 (KPKVAEPVKKSEPKAAAKAEETKVEKVEA), 165–186 (AEVKTENVADKKEPVVTEEKKK), 200–234 (KRAEDIKKEQAAARPEKKKFDKNRNDRNNRNDNRR), and 291–312 (NRRDRDRKKTDSNRDNTKDGNR). A disordered region spans residues 128–352 (KPKVAEPVKK…YQNNQSSNVP (225 aa)). Composition is skewed to polar residues over residues 322–336 (NRNQVRNARNSNWNQ) and 343–352 (YQNNQSSNVP). The tr-type G domain maps to 448–619 (ERPAVVTIMG…LLVAEVQELK (172 aa)). Residues 457–464 (GHVDHGKT) are G1. A GTP-binding site is contributed by 457–464 (GHVDHGKT). Positions 482-486 (GITQH) are G2. The tract at residues 503–506 (DTPG) is G3. GTP is bound by residues 503–507 (DTPGH) and 557–560 (NKLD). The tract at residues 557 to 560 (NKLD) is G4. Positions 595–597 (SAK) are G5.

Belongs to the TRAFAC class translation factor GTPase superfamily. Classic translation factor GTPase family. IF-2 subfamily.

It localises to the cytoplasm. In terms of biological role, one of the essential components for the initiation of protein synthesis. Protects formylmethionyl-tRNA from spontaneous hydrolysis and promotes its binding to the 30S ribosomal subunits. Also involved in the hydrolysis of GTP during the formation of the 70S ribosomal complex. The protein is Translation initiation factor IF-2 (infB) of Lactococcus lactis subsp. cremoris (Streptococcus cremoris).